The primary structure comprises 603 residues: ATP-dependent zinc metalloprotease FtsH (603 aa).

Residues 1 to 2 lie on the Stromal side of the membrane; it reads MK. Residues 3–23 form a helical membrane-spanning segment; that stretch reads NLWIWSLPLIVLAFIGWQELA. At 24-101 the chain is on the lumenal side; that stretch reads NQMPVATSRM…DVDVHAVSNW (78 aa). Residues 102 to 122 traverse the membrane as a helical segment; that stretch reads INVASNWIIPLIIIGVVIWLL. Topologically, residues 123–603 are stromal; it reads SRSASSNTTG…SQAARLTAVN (481 aa). Residue 194 to 201 participates in ATP binding; that stretch reads GPPGTGKT. Residue His-415 participates in Zn(2+) binding. Residue Glu-416 is part of the active site. Zn(2+)-binding residues include His-419 and Asp-493.

This sequence in the central section; belongs to the AAA ATPase family. In the C-terminal section; belongs to the peptidase M41 family. Homohexamer. The cofactor is Zn(2+).

It localises to the plastid. It is found in the chloroplast thylakoid membrane. In terms of biological role, acts as a processive, ATP-dependent zinc metallopeptidase. The chain is ATP-dependent zinc metalloprotease FtsH from Cyanidioschyzon merolae (strain NIES-3377 / 10D) (Unicellular red alga).